A 355-amino-acid polypeptide reads, in one-letter code: UDP-N-acetylglucosamine--N-acetylmuramyl-(pentapeptide) pyrophosphoryl-undecaprenol N-acetylglucosamine transferase (355 aa).

UDP-N-acetyl-alpha-D-glucosamine-binding positions include 15-17 (TGG), Asn127, Arg163, Ser191, Ile244, 263-268 (ALTVSE), and Gln288.

This sequence belongs to the glycosyltransferase 28 family. MurG subfamily.

It localises to the cell inner membrane. The catalysed reaction is di-trans,octa-cis-undecaprenyl diphospho-N-acetyl-alpha-D-muramoyl-L-alanyl-D-glutamyl-meso-2,6-diaminopimeloyl-D-alanyl-D-alanine + UDP-N-acetyl-alpha-D-glucosamine = di-trans,octa-cis-undecaprenyl diphospho-[N-acetyl-alpha-D-glucosaminyl-(1-&gt;4)]-N-acetyl-alpha-D-muramoyl-L-alanyl-D-glutamyl-meso-2,6-diaminopimeloyl-D-alanyl-D-alanine + UDP + H(+). The protein operates within cell wall biogenesis; peptidoglycan biosynthesis. In terms of biological role, cell wall formation. Catalyzes the transfer of a GlcNAc subunit on undecaprenyl-pyrophosphoryl-MurNAc-pentapeptide (lipid intermediate I) to form undecaprenyl-pyrophosphoryl-MurNAc-(pentapeptide)GlcNAc (lipid intermediate II). This chain is UDP-N-acetylglucosamine--N-acetylmuramyl-(pentapeptide) pyrophosphoryl-undecaprenol N-acetylglucosamine transferase, found in Salmonella paratyphi B (strain ATCC BAA-1250 / SPB7).